The primary structure comprises 726 residues: Catalase-peroxidase (726 aa).

The tract at residues 1-33 is disordered; it reads MSTSDDIHNTTATGKCPFHQGGHDQSAGAGTTT. Positions 105–226 form a cross-link, tryptophyl-tyrosyl-methioninium (Trp-Tyr) (with M-252); the sequence is WHGAGTYRSI…LGATEMGLIY (122 aa). Histidine 106 functions as the Proton acceptor in the catalytic mechanism. A cross-link (tryptophyl-tyrosyl-methioninium (Tyr-Met) (with W-105)) is located at residues 226-252; sequence YVNPEGPDHSGEPLSAAAAIRATFGNM. Residue histidine 267 coordinates heme b.

Belongs to the peroxidase family. Peroxidase/catalase subfamily. As to quaternary structure, homodimer or homotetramer. Requires heme b as cofactor. Post-translationally, formation of the three residue Trp-Tyr-Met cross-link is important for the catalase, but not the peroxidase activity of the enzyme.

The enzyme catalyses H2O2 + AH2 = A + 2 H2O. It catalyses the reaction 2 H2O2 = O2 + 2 H2O. Bifunctional enzyme with both catalase and broad-spectrum peroxidase activity. This chain is Catalase-peroxidase, found in Shigella boydii serotype 4 (strain Sb227).